Reading from the N-terminus, the 543-residue chain is T-complex protein 1 subunit eta (543 aa).

An N-acetylmethionine modification is found at Met1. An ADP-binding site is contributed by Gly41. Gly41 provides a ligand contact to ATP. Lys67 is subject to N6-acetyllysine. A Mg(2+)-binding site is contributed by Asp92. ADP-binding residues include Gly93, Thr94, Thr95, Ser96, Ser164, and Ser165. Gly93 contacts ATP. Ser96 serves as a coordination point for ATP. Lys250 and Lys320 each carry N6-acetyllysine. The ATP site is built by Arg398 and Gly409. Gly409 is a binding site for ADP. A Glycyl lysine isopeptide (Lys-Gly) (interchain with G-Cter in SUMO2) cross-link involves residue Lys430. Positions 494 and 499 each coordinate ADP. ATP is bound at residue Arg499. The interval 524–543 is disordered; the sequence is RSTVDAPTAAGRGRGRGRPH. Position 535 is an omega-N-methylarginine (Arg535).

The protein belongs to the TCP-1 chaperonin family. In terms of assembly, component of the chaperonin-containing T-complex (TRiC), a hexadecamer composed of two identical back-to-back stacked rings enclosing a protein folding chamber. Each ring is made up of eight different subunits: TCP1/CCT1, CCT2, CCT3, CCT4, CCT5, CCT6A/CCT6, CCT7, CCT8. Interacts with PACRG. Interacts with DLEC1.

It localises to the cytoplasm. The catalysed reaction is ATP + H2O = ADP + phosphate + H(+). Its function is as follows. Component of the chaperonin-containing T-complex (TRiC), a molecular chaperone complex that assists the folding of actin, tubulin and other proteins upon ATP hydrolysis. The TRiC complex mediates the folding of WRAP53/TCAB1, thereby regulating telomere maintenance. This Homo sapiens (Human) protein is T-complex protein 1 subunit eta (CCT7).